The sequence spans 807 residues: Histone transcription regulator slm9 (807 aa).

2 WD repeats span residues 62–100 and 102–140; these read SFDSPISCIRFTYDGSCLAVATEAGTFLYHSEKWDKAFQ and LSGPAYEVCWSQQGHILATSWKQISIYVKDEGLRTETIV. The disordered stretch occupies residues 144–164; it reads EHADSNHQPAVSIEESKEAVE. WD repeat units lie at residues 182 to 221, 230 to 273, 276 to 322, and 326 to 367; these read GHHTFVGGLAFDPMGQFLASQSFDHTLKVWKLSTFGVEKS, PTGN…YDIN, GHQG…PMAV, and LSCS…EKMD. The segment at 388–437 is disordered; the sequence is NKNAAADRTTSPTQGQPESPSKSILLRPPPSIASSPESKRRKCPKKFVAR. The span at 395 to 409 shows a compositional bias: polar residues; the sequence is RTTSPTQGQPESPSK. Serine 406, serine 421, and serine 422 each carry phosphoserine. The segment covering 426-435 has biased composition (basic residues); sequence KRRKCPKKFV. WD repeat units lie at residues 492 to 526 and 528 to 574; these read DCSWFSYLPNAIVLANGTSVFWAVATEDSSIYIYS and AGRL…AIHS.

It belongs to the WD repeat HIR1 family. In terms of assembly, interacts with hip1 and hip3.

The protein resides in the cytoplasm. Its subcellular location is the nucleus. Its function is as follows. Probably required for replication-independent chromatin assembly. Required for transcriptional silencing in the outer repeat (otr) centromeric repeats and the Tf2 long terminal repeat retrotransposons. May play an indirect role in the regulation of cdc2 and/or wee1 at the G2/M stage of mitosis. The polypeptide is Histone transcription regulator slm9 (slm9) (Schizosaccharomyces pombe (strain 972 / ATCC 24843) (Fission yeast)).